Consider the following 539-residue polypeptide: Chaperonin GroEL (539 aa).

Residues 29–32 (TIGP), 86–90 (DGTTT), Gly-413, 476–478 (NAA), and Asp-492 each bind ATP.

The protein belongs to the chaperonin (HSP60) family. Forms a cylinder of 14 subunits composed of two heptameric rings stacked back-to-back. Interacts with the co-chaperonin GroES.

It localises to the cytoplasm. The catalysed reaction is ATP + H2O + a folded polypeptide = ADP + phosphate + an unfolded polypeptide.. Its function is as follows. Together with its co-chaperonin GroES, plays an essential role in assisting protein folding. The GroEL-GroES system forms a nano-cage that allows encapsulation of the non-native substrate proteins and provides a physical environment optimized to promote and accelerate protein folding. This is Chaperonin GroEL from Staphylococcus epidermidis.